A 274-amino-acid polypeptide reads, in one-letter code: 2,3,4,5-tetrahydropyridine-2,6-dicarboxylate N-succinyltransferase (274 aa).

2 residues coordinate substrate: Arg104 and Asp141.

This sequence belongs to the transferase hexapeptide repeat family. As to quaternary structure, homotrimer.

Its subcellular location is the cytoplasm. It catalyses the reaction (S)-2,3,4,5-tetrahydrodipicolinate + succinyl-CoA + H2O = (S)-2-succinylamino-6-oxoheptanedioate + CoA. It functions in the pathway amino-acid biosynthesis; L-lysine biosynthesis via DAP pathway; LL-2,6-diaminopimelate from (S)-tetrahydrodipicolinate (succinylase route): step 1/3. This chain is 2,3,4,5-tetrahydropyridine-2,6-dicarboxylate N-succinyltransferase, found in Shewanella putrefaciens (strain CN-32 / ATCC BAA-453).